The primary structure comprises 461 residues: Fumarate hydratase class II (461 aa).

Substrate-binding positions include 97–99 (SGT), 127–130 (HPND), 137–139 (SSN), and threonine 185. The Proton donor/acceptor role is filled by histidine 186. Serine 316 is a catalytic residue. Substrate contacts are provided by residues serine 317 and 322-324 (KVN).

It belongs to the class-II fumarase/aspartase family. Fumarase subfamily. Homotetramer.

It localises to the cytoplasm. The catalysed reaction is (S)-malate = fumarate + H2O. Its pathway is carbohydrate metabolism; tricarboxylic acid cycle; (S)-malate from fumarate: step 1/1. Its function is as follows. Involved in the TCA cycle. Catalyzes the stereospecific interconversion of fumarate to L-malate. The chain is Fumarate hydratase class II from Staphylococcus aureus (strain MSSA476).